Reading from the N-terminus, the 110-residue chain is Minor capsid protein VP2 (110 aa).

It belongs to the vesivirus VP2 protein family. Homooligomer. The portal-like structure consists in 12 copies of VP2. Interacts with capsid protein VP1.

Its subcellular location is the virion. It localises to the host cytoplasm. Functionally, minor structural protein that forms a portal-like structure at a unique three-fold axis of symmetry, following binding to the host receptor. The channel formed by VP2 may allow the delivery of the viral genome through the host endosomal membrane. The protein is Minor capsid protein VP2 of Otariidae (fur seals &amp; sea lions).